The chain runs to 132 residues: Small ribosomal subunit protein uS8 (132 aa).

This sequence belongs to the universal ribosomal protein uS8 family. Part of the 30S ribosomal subunit. Contacts proteins S5 and S12.

Its function is as follows. One of the primary rRNA binding proteins, it binds directly to 16S rRNA central domain where it helps coordinate assembly of the platform of the 30S subunit. The protein is Small ribosomal subunit protein uS8 of Xanthomonas oryzae pv. oryzae (strain MAFF 311018).